Consider the following 371-residue polypeptide: Protein IQ-DOMAIN 7 (371 aa).

Residues 1–32 (MGGSGNWIRSLISNRKPVNDQQEKLSDKSSKK) form a disordered region. Over residues 17–29 (PVNDQQEKLSDKS) the composition is skewed to basic and acidic residues. 2 IQ domains span residues 93–121 (REWASTRIQAAFRAFLARQAFRALKAVVR) and 122–144 (IQAIFRGRQVRKQAAVTLRCMQA). Residues 125–141 (IFRGRQVRKQAAVTLRC) are calmodulin-binding. Disordered stretches follow at residues 285-308 (SGMSYDSLHDETSTSSTSQSPVAF) and 327-371 (LTQS…SQRS). 2 stretches are compositionally biased toward polar residues: residues 297-308 (STSSTSQSPVAF) and 327-341 (LTQSTQAKQRQSGLS).

Belongs to the IQD family. Binds to multiple calmodulin (CaM) in the presence of Ca(2+) and CaM-like proteins.

Its subcellular location is the nucleus. It is found in the nucleus envelope. The protein localises to the cytoplasm. It localises to the cytoskeleton. In terms of biological role, may be involved in cooperative interactions with calmodulins or calmodulin-like proteins. Recruits calmodulin proteins to microtubules, thus being a potential scaffold in cellular signaling and trafficking. May associate with nucleic acids and regulate gene expression at the transcriptional or post-transcriptional level. This Arabidopsis thaliana (Mouse-ear cress) protein is Protein IQ-DOMAIN 7.